The primary structure comprises 118 residues: Small ribosomal subunit protein uS13 (118 aa).

The tract at residues 94 to 118 (GLPLRGQRTKTNARTRKGPRKPIRK) is disordered.

Belongs to the universal ribosomal protein uS13 family. Part of the 30S ribosomal subunit. Forms a loose heterodimer with protein S19. Forms two bridges to the 50S subunit in the 70S ribosome.

In terms of biological role, located at the top of the head of the 30S subunit, it contacts several helices of the 16S rRNA. In the 70S ribosome it contacts the 23S rRNA (bridge B1a) and protein L5 of the 50S subunit (bridge B1b), connecting the 2 subunits; these bridges are implicated in subunit movement. Contacts the tRNAs in the A and P-sites. In Chromohalobacter salexigens (strain ATCC BAA-138 / DSM 3043 / CIP 106854 / NCIMB 13768 / 1H11), this protein is Small ribosomal subunit protein uS13.